A 679-amino-acid polypeptide reads, in one-letter code: Methionine--tRNA ligase (679 aa).

The 'HIGH' region motif lies at 14 to 24; the sequence is PYANGSIHLGH. Zn(2+)-binding residues include C145, C148, C158, and C161. The 'KMSKS' region signature appears at 331–335; it reads KMSKS. K334 contributes to the ATP binding site. Positions 577–679 constitute a tRNA-binding domain; it reads TFAAVDLRVA…SGAKPGQRIK (103 aa).

This sequence belongs to the class-I aminoacyl-tRNA synthetase family. MetG type 1 subfamily. As to quaternary structure, homodimer. Zn(2+) is required as a cofactor.

It is found in the cytoplasm. It catalyses the reaction tRNA(Met) + L-methionine + ATP = L-methionyl-tRNA(Met) + AMP + diphosphate. Is required not only for elongation of protein synthesis but also for the initiation of all mRNA translation through initiator tRNA(fMet) aminoacylation. This chain is Methionine--tRNA ligase, found in Pseudomonas putida (strain GB-1).